Here is a 569-residue protein sequence, read N- to C-terminus: Cytochrome P450 monooxygenase abl1 (569 aa).

Cysteine 464 is a heme binding site.

The protein belongs to the cytochrome P450 family. The cofactor is heme.

It functions in the pathway hormone biosynthesis. Cytochrome P450 monooxygenase; part of the gene cluster that mediates the biosynthesis of abscisic acid (ABA), a phytohormone that acts antagonistically toward salicylic acid (SA), jasmonic acid (JA) and ethylene (ETH) signaling, to impede plant defense responses. The first step of the pathway catalyzes the reaction from farnesyl diphosphate to alpha-ionylideneethane performed by the alpha-ionylideneethane synthase abl3 via a three-step reaction mechanism involving 2 neutral intermediates, beta-farnesene and allofarnesene. The cytochrome P450 monooxygenase abl1 might then be involved in the conversion of alpha-ionylideneethane to alpha-ionylideneacetic acid. Alpha-ionylideneacetic acid is further converted to abscisic acid in 2 steps involving the cytochrome P450 monooxygenase abl2 and the short-chain dehydrogenase/reductase abl4, via the intermediates 1'-deoxy-ABA or 1',4'-trans-diol-ABA, depending on the order of action of these 2 enzymes. Abl2 is responsible for the hydroxylation of carbon atom C-1' and abl4 might be involved in the oxidation of the C-4' carbon atom. In Leptosphaeria maculans (strain JN3 / isolate v23.1.3 / race Av1-4-5-6-7-8) (Blackleg fungus), this protein is Cytochrome P450 monooxygenase abl1.